A 2025-amino-acid polypeptide reads, in one-letter code: E3 ubiquitin-protein ligase TTC3 (2025 aa).

An interaction with POLG region spans residues 1-230 (MDNFAEGDFT…TQSCMDCIEE (230 aa)). TPR repeat units follow at residues 231 to 264 (GELMKMKGNEEFSKERFDIAIIYYTRAIEYRPEN) and 266 to 298 (LLYGNRALCFLRTGQFRNALGDGKRATILKNTW). Ser-378 carries the phosphoserine; by PKB/AKT2 modification. Positions 423 to 458 (DCHPEFSPPSSQPPKHKGKQKSRNNESEKFSSSSPL) are disordered. 2 TPR repeats span residues 536 to 572 (VLVVYGLAISLLGIGQPEELSEAENQFKRIIEHYPSE) and 576 to 609 (CLAYCGIGKVYLKKNRFLEALNHFEKARTLIYRL). Residues 786 to 805 (ERMEEDLRESNPPKNEEQKE) are disordered. Over residues 793–805 (RESNPPKNEEQKE) the composition is skewed to basic and acidic residues. At Ser-1009 the chain carries Phosphoserine. 4 disordered regions span residues 1012–1068 (APFS…GPFA), 1215–1295 (KPDV…SCNS), 1773–1842 (DPSV…SPKK), and 1894–1944 (ILDE…QKAE). Positions 1019-1029 (VKNKSKKKKPK) are enriched in basic residues. The segment covering 1038–1052 (SGTTSVTSNNEIITS) has biased composition (polar residues). At Ser-1061 the chain carries Phosphoserine. A compositionally biased stretch (basic and acidic residues) spans 1894-1912 (ILDEQKKKKPNPGKDKRTY). Polar residues predominate over residues 1913–1928 (EPSSATPVTRSSQGSP). An RING-type zinc finger spans residues 1957–1997 (CEICHEVFKSKNVRVLKCGHKYHKGCFKQWLKGQSACPACQ). The disordered stretch occupies residues 2004 to 2025 (EESPSGRGWPSQNQELPSCSSR). Polar residues predominate over residues 2013–2025 (PSQNQELPSCSSR).

Interacts (when phosphorylated on Ser-378) with AKT1, AKT2 and AKT3 (when phosphorylated). Interacts with CIT. Interacts with POLG. Interacts with HSP70. Interacts with SMURF2. Post-translationally, phosphorylation on Ser-378 by Akt is required for ubiquitin ligase activity. In terms of processing, proteolytically cleaved into differently sized N- and C-terminal fragments. Found in all tissues examined.

The protein resides in the nucleus. It is found in the cytoplasm. The protein localises to the golgi apparatus. The enzyme catalyses S-ubiquitinyl-[E2 ubiquitin-conjugating enzyme]-L-cysteine + [acceptor protein]-L-lysine = [E2 ubiquitin-conjugating enzyme]-L-cysteine + N(6)-ubiquitinyl-[acceptor protein]-L-lysine.. Its pathway is protein modification; protein ubiquitination. Functionally, E3 ubiquitin-protein ligase which catalyzes the formation of 'Lys-48'-polyubiquitin chains. Mediates the ubiquitination and subsequent degradation of phosphorylated Akt (AKT1, AKT2 and AKT3) in the nucleus. Acts as a terminal regulator of Akt signaling after activation; its phosphorylation by Akt, which is a prerequisite for ubiquitin ligase activity, suggests the existence of a regulation mechanism required to control Akt levels after activation. Positively regulates TGFB1-induced epithelial-mesenchymal transition and myofibroblast differentiation by mediating the ubiquitination and subsequent degradation of SMURF2. Regulates neuronal differentiation by regulating actin remodeling and Golgi organization via a signaling cascade involving RHOA, CIT and ROCK. Inhibits cell proliferation. The protein is E3 ubiquitin-protein ligase TTC3 (TTC3) of Homo sapiens (Human).